The sequence spans 314 residues: Methionyl-tRNA formyltransferase (314 aa).

A (6S)-5,6,7,8-tetrahydrofolate-binding site is contributed by 111-114; that stretch reads SLLP.

It belongs to the Fmt family.

It catalyses the reaction L-methionyl-tRNA(fMet) + (6R)-10-formyltetrahydrofolate = N-formyl-L-methionyl-tRNA(fMet) + (6S)-5,6,7,8-tetrahydrofolate + H(+). Its function is as follows. Attaches a formyl group to the free amino group of methionyl-tRNA(fMet). The formyl group appears to play a dual role in the initiator identity of N-formylmethionyl-tRNA by promoting its recognition by IF2 and preventing the misappropriation of this tRNA by the elongation apparatus. The chain is Methionyl-tRNA formyltransferase from Nitrobacter winogradskyi (strain ATCC 25391 / DSM 10237 / CIP 104748 / NCIMB 11846 / Nb-255).